Here is a 200-residue protein sequence, read N- to C-terminus: Ribonuclease HII (200 aa).

Positions 9-198 (ALIAGVDEVG…VQRVLAQAKG (190 aa)) constitute an RNase H type-2 domain. Residues Asp-15, Glu-16, and Asp-107 each coordinate a divalent metal cation.

This sequence belongs to the RNase HII family. Mn(2+) serves as cofactor. It depends on Mg(2+) as a cofactor.

The protein localises to the cytoplasm. The enzyme catalyses Endonucleolytic cleavage to 5'-phosphomonoester.. Functionally, endonuclease that specifically degrades the RNA of RNA-DNA hybrids. This Pseudoalteromonas translucida (strain TAC 125) protein is Ribonuclease HII.